The following is a 298-amino-acid chain: Inosose dehydratase (298 aa).

Belongs to the IolE/MocC family. Glutathione is required as a cofactor. It depends on Co(2+) as a cofactor. The cofactor is Mn(2+).

The enzyme catalyses scyllo-inosose = 3D-3,5/4-trihydroxycyclohexane-1,2-dione + H2O. It participates in polyol metabolism; myo-inositol degradation into acetyl-CoA; acetyl-CoA from myo-inositol: step 2/7. In terms of biological role, catalyzes the dehydration of inosose (2-keto-myo-inositol, 2KMI or 2,4,6/3,5-pentahydroxycyclohexanone) to 3D-(3,5/4)-trihydroxycyclohexane-1,2-dione (D-2,3-diketo-4-deoxy-epi-inositol). The polypeptide is Inosose dehydratase (Clostridium botulinum (strain Eklund 17B / Type B)).